A 212-amino-acid chain; its full sequence is Thymidine kinase (212 aa).

Residues 11-18 (SPMNAGKT), 43-45 (DTR), and 86-89 (DEAQ) contribute to the ATP site. E87 acts as the Proton acceptor in catalysis. Residue F119 participates in substrate binding. Residues C144, C147, C183, and C186 each contribute to the Zn(2+) site.

This sequence belongs to the thymidine kinase family.

It catalyses the reaction thymidine + ATP = dTMP + ADP + H(+). In Encephalitozoon cuniculi (strain GB-M1) (Microsporidian parasite), this protein is Thymidine kinase (TK).